A 272-amino-acid chain; its full sequence is Undecaprenyl-diphosphatase (272 aa).

7 helical membrane passes run 6–26, 45–65, 92–112, 115–135, 189–209, 225–245, and 251–271; these read SLLIAFILGVVEGLTEFLPVS, AKTFEVIIQLGSILAVVVMFW, THILLAMIPAVVLGLVFHDVI, LFYPQNVMYALVVGGFLLLAA, YAASEFSFILAVPMMMGATVL, MFAVGFVTAFLVALIAIKTFL, and ISFVPFAIYRFIVAGVVYMVF.

Belongs to the UppP family.

The protein resides in the cell inner membrane. It catalyses the reaction di-trans,octa-cis-undecaprenyl diphosphate + H2O = di-trans,octa-cis-undecaprenyl phosphate + phosphate + H(+). Its function is as follows. Catalyzes the dephosphorylation of undecaprenyl diphosphate (UPP). Confers resistance to bacitracin. This Pectobacterium carotovorum subsp. carotovorum (strain PC1) protein is Undecaprenyl-diphosphatase.